A 144-amino-acid polypeptide reads, in one-letter code: Small ribosomal subunit protein uS19 (144 aa).

It belongs to the universal ribosomal protein uS19 family.

Functionally, protein S19 forms a complex with S13 that binds strongly to the 16S ribosomal RNA. In Aeropyrum pernix (strain ATCC 700893 / DSM 11879 / JCM 9820 / NBRC 100138 / K1), this protein is Small ribosomal subunit protein uS19 (rps19).